A 423-amino-acid chain; its full sequence is Putative competence-damage inducible protein (423 aa).

It belongs to the CinA family.

This Streptococcus pyogenes serotype M1 protein is Putative competence-damage inducible protein.